A 592-amino-acid chain; its full sequence is E3 ubiquitin-protein ligase RNF180 (592 aa).

Residues 1 to 564 are Cytoplasmic-facing; sequence MKRSEESTST…DSRGWWFDMD (564 aa). Ser-231 bears the Phosphoserine mark. Residues 282 to 489 are interaction with ZIC2; sequence QSPPSFDPNM…VFLQTELNNA (208 aa). The RING-type zinc-finger motif lies at 432–474; that stretch reads CAVCLDVYFNPYMCYPCHHIFCEPCLRTLAKDNPASTPCPLCR. A helical transmembrane segment spans residues 565-585; it reads MVIIYIYSVNWVIGFVVFCFL. At 586–592 the chain is on the extracellular side; sequence CYFFFPF.

Interacts with ZIC2. In terms of tissue distribution, brain, kidney, testis and uterus. membrane protein. Nucleus envelope.

Its subcellular location is the endoplasmic reticulum membrane. It is found in the nucleus envelope. The catalysed reaction is S-ubiquitinyl-[E2 ubiquitin-conjugating enzyme]-L-cysteine + [acceptor protein]-L-lysine = [E2 ubiquitin-conjugating enzyme]-L-cysteine + N(6)-ubiquitinyl-[acceptor protein]-L-lysine.. Its pathway is protein modification; protein ubiquitination. E3 ubiquitin-protein ligase which promotes polyubiquitination and degradation by the proteasome pathway of ZIC2. This chain is E3 ubiquitin-protein ligase RNF180 (Rnf180), found in Mus musculus (Mouse).